The sequence spans 151 residues: C-C motif chemokine 25 (151 aa).

A signal peptide spans 1–22 (MNLWLLVCLVASLMGAWSTVHT). 2 disulfide bridges follow: Cys29-Cys57 and Cys30-Cys73. The disordered stretch occupies residues 94 to 151 (THSKQHLGSRRNLQDSHLGGQRSNTGMSRLAHSKSKSSRSTRSNKKKTSFLNMANPGP). The segment covering 124–141 (AHSKSKSSRSTRSNKKKT) has biased composition (basic residues).

This sequence belongs to the intercrine beta (chemokine CC) family.

The protein localises to the secreted. Its function is as follows. Potentially involved in T-cell development. Recombinant protein shows chemotactic activity on thymocytes, macrophages, THP-1 cells, and dendritics cells but is inactive on peripheral blood lymphocytes and neutrophils. Binds to CCR9. Binds to atypical chemokine receptor ACKR4 and mediates the recruitment of beta-arrestin (ARRB1/2) to ACKR4. The chain is C-C motif chemokine 25 (CCL25) from Canis lupus familiaris (Dog).